The following is a 175-amino-acid chain: Viral interleukin-10 homolog (175 aa).

A signal peptide spans 1 to 19; it reads MLSVMVSSSLVLIVFFLGA. 2 disulfide bridges follow: Cys37–Cys127 and Cys81–Cys132. Residue Asn151 is glycosylated (N-linked (GlcNAc...) asparagine; by host).

Belongs to the IL-10 family. In terms of assembly, homodimer; disulfide-linked.

It is found in the secreted. Functionally, functional viral IL-10 homolog. Can bind to the human IL-10 receptor and compete with human IL-10 for binding sites. Requires both subunits of the human IL-10 receptor complex to induce signal transduction events and biological activities. IL-10 signaling pathway has several immunosuppressive activities that are exploited by the virus. Inhibits TLR-induced type I interferon production in host plasmacytoid dendritic cells. The protein is Viral interleukin-10 homolog (UL111A) of Human cytomegalovirus (strain AD169) (HHV-5).